Here is an 89-residue protein sequence, read N- to C-terminus: Cell division topological specificity factor (89 aa).

This sequence belongs to the MinE family.

Functionally, prevents the cell division inhibition by proteins MinC and MinD at internal division sites while permitting inhibition at polar sites. This ensures cell division at the proper site by restricting the formation of a division septum at the midpoint of the long axis of the cell. The chain is Cell division topological specificity factor from Yersinia pestis bv. Antiqua (strain Angola).